A 367-amino-acid polypeptide reads, in one-letter code: 2-aminoethylphosphonate--pyruvate transaminase (367 aa).

Lys193 carries the N6-(pyridoxal phosphate)lysine modification.

Belongs to the class-V pyridoxal-phosphate-dependent aminotransferase family. PhnW subfamily. In terms of assembly, homodimer. Requires pyridoxal 5'-phosphate as cofactor.

The enzyme catalyses (2-aminoethyl)phosphonate + pyruvate = phosphonoacetaldehyde + L-alanine. Its function is as follows. Involved in phosphonate degradation. The polypeptide is 2-aminoethylphosphonate--pyruvate transaminase (Vibrio vulnificus (strain YJ016)).